A 448-amino-acid chain; its full sequence is Serine--tRNA ligase (448 aa).

246 to 248 serves as a coordination point for L-serine; the sequence is TAE. ATP is bound by residues 277 to 279 and Val-293; that span reads RKE. Residue Glu-300 participates in L-serine binding. 364-367 contributes to the ATP binding site; sequence ELAS. Thr-399 provides a ligand contact to L-serine.

This sequence belongs to the class-II aminoacyl-tRNA synthetase family. Type-1 seryl-tRNA synthetase subfamily. As to quaternary structure, homodimer. The tRNA molecule binds across the dimer.

The protein resides in the cytoplasm. It carries out the reaction tRNA(Ser) + L-serine + ATP = L-seryl-tRNA(Ser) + AMP + diphosphate + H(+). It catalyses the reaction tRNA(Sec) + L-serine + ATP = L-seryl-tRNA(Sec) + AMP + diphosphate + H(+). It functions in the pathway aminoacyl-tRNA biosynthesis; selenocysteinyl-tRNA(Sec) biosynthesis; L-seryl-tRNA(Sec) from L-serine and tRNA(Sec): step 1/1. In terms of biological role, catalyzes the attachment of serine to tRNA(Ser). Is also able to aminoacylate tRNA(Sec) with serine, to form the misacylated tRNA L-seryl-tRNA(Sec), which will be further converted into selenocysteinyl-tRNA(Sec). This Pyrobaculum islandicum (strain DSM 4184 / JCM 9189 / GEO3) protein is Serine--tRNA ligase.